We begin with the raw amino-acid sequence, 247 residues long: Orotidine 5'-phosphate decarboxylase (247 aa).

Residues aspartate 21, lysine 43, 70 to 79 (DMKFHDIPNT), threonine 129, arginine 190, glutamine 199, glycine 219, and arginine 220 each bind substrate. The active-site Proton donor is the lysine 72.

It belongs to the OMP decarboxylase family. Type 1 subfamily. Homodimer.

It catalyses the reaction orotidine 5'-phosphate + H(+) = UMP + CO2. It functions in the pathway pyrimidine metabolism; UMP biosynthesis via de novo pathway; UMP from orotate: step 2/2. Catalyzes the decarboxylation of orotidine 5'-monophosphate (OMP) to uridine 5'-monophosphate (UMP). This is Orotidine 5'-phosphate decarboxylase from Chromobacterium violaceum (strain ATCC 12472 / DSM 30191 / JCM 1249 / CCUG 213 / NBRC 12614 / NCIMB 9131 / NCTC 9757 / MK).